Reading from the N-terminus, the 256-residue chain is Small ribosomal subunit protein eS1 (256 aa).

Position 2 is an N-acetylalanine; partial (Ala2).

The protein belongs to the eukaryotic ribosomal protein eS1 family. In terms of assembly, component of the small ribosomal subunit. Mature ribosomes consist of a small (40S) and a large (60S) subunit. The 40S subunit contains about 33 different proteins and 1 molecule of RNA (18S). The 60S subunit contains about 49 different proteins and 3 molecules of RNA (25S, 5.8S and 5S).

The protein localises to the cytoplasm. The protein is Small ribosomal subunit protein eS1 (rps1) of Botryotinia fuckeliana (strain B05.10) (Noble rot fungus).